The chain runs to 183 residues: Ribosome maturation factor RimP (183 aa).

The protein belongs to the RimP family.

It is found in the cytoplasm. Its function is as follows. Required for maturation of 30S ribosomal subunits. The chain is Ribosome maturation factor RimP from Leptothrix cholodnii (strain ATCC 51168 / LMG 8142 / SP-6) (Leptothrix discophora (strain SP-6)).